We begin with the raw amino-acid sequence, 251 residues long: ATP synthase subunit a, chloroplastic (251 aa).

Transmembrane regions (helical) follow at residues 3–23, 38–58, 99–119, 138–158, 203–223, and 224–244; these read IVLL…IANV, IHGQ…FLSI, VPYI…GALI, INTT…AGLN, LVVA…LIFL, and GLFT…SYIG.

It belongs to the ATPase A chain family. F-type ATPases have 2 components, CF(1) - the catalytic core - and CF(0) - the membrane proton channel. CF(1) has five subunits: alpha(3), beta(3), gamma(1), delta(1), epsilon(1). CF(0) has four main subunits: a, b, b' and c.

Its subcellular location is the plastid. The protein localises to the chloroplast thylakoid membrane. Its function is as follows. Key component of the proton channel; it plays a direct role in the translocation of protons across the membrane. This chain is ATP synthase subunit a, chloroplastic, found in Euglena gracilis.